We begin with the raw amino-acid sequence, 346 residues long: Phenylalanine--tRNA ligase alpha subunit (346 aa).

Glu-261 lines the Mg(2+) pocket.

This sequence belongs to the class-II aminoacyl-tRNA synthetase family. Phe-tRNA synthetase alpha subunit type 1 subfamily. Tetramer of two alpha and two beta subunits. It depends on Mg(2+) as a cofactor.

The protein localises to the cytoplasm. It catalyses the reaction tRNA(Phe) + L-phenylalanine + ATP = L-phenylalanyl-tRNA(Phe) + AMP + diphosphate + H(+). This chain is Phenylalanine--tRNA ligase alpha subunit, found in Dehalococcoides mccartyi (strain ATCC BAA-2100 / JCM 16839 / KCTC 5957 / BAV1).